Here is a 139-residue protein sequence, read N- to C-terminus: MHRVTVTLDDDLMKKLDAIIEARGYQNRSEAIRDLARIGIQQTSAHASAEHCVGAMVYTYDHSKRDLPRKLTQSFHNHHELSRATMHVHLDHDQCLEVTILDGKANEIQHFADHIFSERGVRYGRLVTIPTSGDGHAHD.

Residues His76, His87, His89, and Cys95 each coordinate Ni(2+).

It belongs to the transcriptional regulatory CopG/NikR family. It depends on Ni(2+) as a cofactor.

Transcriptional regulator. The polypeptide is Putative nickel-responsive regulator (Rhodopseudomonas palustris (strain HaA2)).